The sequence spans 280 residues: MPFFFSGYAMNALPVRLEAVIFDWAGTLVDFGSFAPTRVFVEAFAQFGVALTLEQARGPMGMGKWDHIRALCDDPGIASQYQERFGALPDDAAVTAIYERFLPMQLEKVAEYSDVIPGALQTLREIRERGLKVGSCSGYPASVMRRVLERALAGGLEIATVVASDQVPRARPAPAMALKNAVELGVADVAACVKVDDTGVGIEEGRRAGMWSVGLLLSGNAAGLTRDAYQALDEVGREAARARARQAFASAEPHYFIDTIADLPSVLSDIEARLASAERP.

D23 serves as the catalytic Nucleophile. D23 and A25 together coordinate Mg(2+). The Schiff-base intermediate with substrate role is filled by K64. D197 contacts Mg(2+).

Belongs to the HAD-like hydrolase superfamily. PhnX family. Homodimer. Mg(2+) is required as a cofactor.

It catalyses the reaction phosphonoacetaldehyde + H2O = acetaldehyde + phosphate + H(+). Involved in phosphonate degradation. The protein is Phosphonoacetaldehyde hydrolase of Bordetella avium (strain 197N).